A 415-amino-acid chain; its full sequence is L-cysteine:1D-myo-inositol 2-amino-2-deoxy-alpha-D-glucopyranoside ligase (415 aa).

C43 is a binding site for Zn(2+). L-cysteinyl-5'-AMP-binding positions include 43-46 (CGIT), T58, and 81-83 (NIT). Residues 45–55 (ITPYDATHLGH) carry the 'HIGH' region motif. Residues 187–192 (ERGGDP) carry the 'ERGGDP' region motif. W227 contributes to the L-cysteinyl-5'-AMP binding site. Position 231 (C231) interacts with Zn(2+). 249–251 (GSD) provides a ligand contact to L-cysteinyl-5'-AMP. H256 provides a ligand contact to Zn(2+). An L-cysteinyl-5'-AMP-binding site is contributed by I283. The 'KMSKS' region signature appears at 289 to 293 (KMSKS).

The protein belongs to the class-I aminoacyl-tRNA synthetase family. MshC subfamily. As to quaternary structure, monomer. Zn(2+) is required as a cofactor.

The enzyme catalyses 1D-myo-inositol 2-amino-2-deoxy-alpha-D-glucopyranoside + L-cysteine + ATP = 1D-myo-inositol 2-(L-cysteinylamino)-2-deoxy-alpha-D-glucopyranoside + AMP + diphosphate + H(+). Catalyzes the ATP-dependent condensation of GlcN-Ins and L-cysteine to form L-Cys-GlcN-Ins. The sequence is that of L-cysteine:1D-myo-inositol 2-amino-2-deoxy-alpha-D-glucopyranoside ligase from Mycobacterium sp. (strain JLS).